A 253-amino-acid polypeptide reads, in one-letter code: Tetraspanin-11 (253 aa).

A run of 3 helical transmembrane segments spans residues 19-39, 63-83, and 93-113; these read LLFI…AVGI, ILIF…GAII, and YFCL…LAHV. N-linked (GlcNAc...) asparagine glycosylation is present at Asn127. The helical transmembrane segment at 220–240 threads the bilayer; it reads LLLMGAVGIGVACLQICGMVL.

Belongs to the tetraspanin (TM4SF) family.

The protein localises to the membrane. The sequence is that of Tetraspanin-11 (Tspan11) from Mus musculus (Mouse).